The following is a 113-amino-acid chain: Putative membrane protein insertion efficiency factor (113 aa).

The protein belongs to the UPF0161 family.

The protein localises to the cell inner membrane. Could be involved in insertion of integral membrane proteins into the membrane. The sequence is that of Putative membrane protein insertion efficiency factor from Campylobacter jejuni subsp. jejuni serotype O:2 (strain ATCC 700819 / NCTC 11168).